Consider the following 34-residue polypeptide: Phalloidin proprotein (34 aa).

Positions M1–P10 are excised as a propeptide. Residues A11–P17 constitute a cross-link (cyclopeptide (Ala-Pro)). Positions W12–C16 form a cross-link, 2'-cysteinyl-6'-hydroxytryptophan sulfoxide (Trp-Cys). The propeptide occupies C18–C34.

This sequence belongs to the MSDIN fungal toxin family. Processed by the macrocyclase-peptidase enzyme POPB to yield a toxic cyclic heptapeptide. POPB first removes 10 residues from the N-terminus. Conformational trapping of the remaining peptide forces the enzyme to release this intermediate rather than proceed to macrocyclization. The enzyme rebinds the remaining peptide in a different conformation and catalyzes macrocyclization of the N-terminal 7 residues.

Its function is as follows. Toxin that belongs to the bicyclic heptapeptides called phallotoxins. Although structurally related to amatoxins, phallotoxins have a different mode of action, which is the stabilization of F-actin. Phallotoxins are poisonous when administered parenterally, but not orally because of poor absorption. In Amanita phalloides (Death cap), this protein is Phalloidin proprotein.